Consider the following 153-residue polypeptide: 6,7-dimethyl-8-ribityllumazine synthase (153 aa).

5-amino-6-(D-ribitylamino)uracil-binding positions include Phe-22, 56 to 58 (AFE), and 80 to 82 (TVI). Residue 85-86 (ST) participates in (2S)-2-hydroxy-3-oxobutyl phosphate binding. His-88 acts as the Proton donor in catalysis. Phe-113 is a 5-amino-6-(D-ribitylamino)uracil binding site. A (2S)-2-hydroxy-3-oxobutyl phosphate-binding site is contributed by Arg-127.

The protein belongs to the DMRL synthase family. Forms an icosahedral capsid composed of 60 subunits, arranged as a dodecamer of pentamers.

It catalyses the reaction (2S)-2-hydroxy-3-oxobutyl phosphate + 5-amino-6-(D-ribitylamino)uracil = 6,7-dimethyl-8-(1-D-ribityl)lumazine + phosphate + 2 H2O + H(+). The protein operates within cofactor biosynthesis; riboflavin biosynthesis; riboflavin from 2-hydroxy-3-oxobutyl phosphate and 5-amino-6-(D-ribitylamino)uracil: step 1/2. Catalyzes the formation of 6,7-dimethyl-8-ribityllumazine by condensation of 5-amino-6-(D-ribitylamino)uracil with 3,4-dihydroxy-2-butanone 4-phosphate. This is the penultimate step in the biosynthesis of riboflavin. The chain is 6,7-dimethyl-8-ribityllumazine synthase from Actinobacillus pleuropneumoniae serotype 5b (strain L20).